We begin with the raw amino-acid sequence, 226 residues long: ATP-dependent dethiobiotin synthetase BioD (226 aa).

14–19 (GIGKTF) contacts ATP. Thr-18 is a binding site for Mg(2+). Lys-39 is an active-site residue. Ser-43 lines the substrate pocket. ATP is bound by residues Asp-56, 117-120 (EGVG), 177-178 (NT), 206-208 (PHI), and Asn-213. Residues Asp-56 and Glu-117 each coordinate Mg(2+).

Belongs to the dethiobiotin synthetase family. In terms of assembly, homodimer. Mg(2+) is required as a cofactor.

It is found in the cytoplasm. It catalyses the reaction (7R,8S)-7,8-diammoniononanoate + CO2 + ATP = (4R,5S)-dethiobiotin + ADP + phosphate + 3 H(+). The protein operates within cofactor biosynthesis; biotin biosynthesis; biotin from 7,8-diaminononanoate: step 1/2. Catalyzes a mechanistically unusual reaction, the ATP-dependent insertion of CO2 between the N7 and N8 nitrogen atoms of 7,8-diaminopelargonic acid (DAPA, also called 7,8-diammoniononanoate) to form a ureido ring. The polypeptide is ATP-dependent dethiobiotin synthetase BioD (Xylella fastidiosa (strain M12)).